The sequence spans 163 residues: Iron-sulfur cluster assembly protein 2 (163 aa).

The transit peptide at methionine 1–aspartate 48 directs the protein to the mitochondrion.

The protein belongs to the NifU family. In terms of assembly, component of the core Fe-S cluster (ISC) assembly machinery. [2Fe-2S] cluster serves as cofactor. Mostly expressed in leaves, pollen and flowers.

It is found in the mitochondrion matrix. The protein operates within cofactor biosynthesis; iron-sulfur cluster biosynthesis. Functionally, scaffold protein for the de novo synthesis of iron-sulfur (Fe-S) clusters within mitochondria, which is required for maturation of both mitochondrial and cytoplasmic [2Fe-2S] and [4Fe-4S] proteins. First, a [2Fe-2S] cluster is transiently assembled on the scaffold protein ISCU (ISU1, ISU2 or ISU3). In a second step, the cluster is released from ISCU, transferred to a glutaredoxin, followed by the formation of mitochondrial [2Fe-2S] proteins, the synthesis of [4Fe-4S] clusters and their target-specific insertion into the recipient apoproteins. Cluster assembly on ISCU depends on the function of the cysteine desulfurase complex NFS1-ISD11, which serves as the sulfur donor for cluster synthesis, the iron-binding protein frataxin as the putative iron donor, and the electron transfer chain comprised of ferredoxin reductase and ferredoxin, which receive their electrons from NADH. This is Iron-sulfur cluster assembly protein 2 (ISU2) from Arabidopsis thaliana (Mouse-ear cress).